The sequence spans 603 residues: O-acetyltransferase OatA (603 aa).

Transmembrane regions (helical) follow at residues 17–37, 45–65, 87–107, 148–168, 177–197, 211–231, 239–259, 268–288, 311–331, 333–353, and 382–402; these read YLPGLDGLRAFAVIGIIIYHL, GFLGVDTFFVISGYLITSLLI, LIPAVLFLICVVLTFTLIFKP, LWSLAIEEQFYLLFPLVITFL, IIQTLFIVSLISLGLMIVIHF, TRLQTLLLGCILAFIWPPFAL, IVVSLDIIGISGFAVLMTLFF, IYNGGFYIISFATLFIIAIAV, YSLYLWHYPIIVFVNSYYVQG, IPVYVYIIEILLTALMAEISY, and VLVILLLVPSIVVLSGQFDAL. Active-site residues include Ser-453, Asp-575, and His-578.

Belongs to the acyltransferase 3 family. As to quaternary structure, monomer.

The protein localises to the cell membrane. Its function is as follows. Responsible for O-acetylation at the C(6)-hydroxyl group of N-acetylmuramyl residues, forming the corresponding N,6-O-diacetylmuramic acid of the peptidoglycan. O-acetylation of the peptidoglycan is the major determinant for lysozyme resistance. The polypeptide is O-acetyltransferase OatA (Staphylococcus aureus (strain NCTC 8325 / PS 47)).